A 337-amino-acid polypeptide reads, in one-letter code: Palmitoyltransferase ZDHHC15 (337 aa).

Residues 1–20 (MRRGWKMALSGGLRCCRRVL) are Cytoplasmic-facing. Residues 21-41 (SWVPVLVIVLVVLWSYYAYVF) form a helical membrane-spanning segment. Over 42–56 (ELCLVTVLSPAEKVI) the chain is Lumenal. A helical transmembrane segment spans residues 57–77 (YLILYHAIFVFFAWTYWKSIF). At 78 to 172 (TLPQQPNQKF…NNCIGFSNYK (95 aa)) the chain is on the cytoplasmic side. The 51-residue stretch at 129–179 (RFCDRCHLIKPDRCHHCSVCAMCVLKMDHHCPWVNNCIGFSNYKFFLQFLA) folds into the DHHC domain. The Zn(2+) site is built by C131, C134, H144, C145, C148, C151, and H158. The S-palmitoyl cysteine intermediate role is filled by C159. A Zn(2+)-binding site is contributed by C165. A helical transmembrane segment spans residues 173-193 (FFLQFLAYSVLYCLYIATTVF). The Lumenal segment spans residues 194–210 (SYFIKYWRGELPSVRSK). Residues 211–234 (FHVLFLLFVACMFFVSLVILFGYH) traverse the membrane as a helical segment. The Cytoplasmic portion of the chain corresponds to 235–337 (CWLVSRNKTT…SSSLAVESET (103 aa)). The interval 293 to 337 (HSFPMRSMNESQNPLLANEEPWEDNEDDSRDYPEGSSSLAVESET) is disordered. The segment covering 312-321 (EPWEDNEDDS) has biased composition (acidic residues). Polar residues predominate over residues 327–337 (GSSSLAVESET).

Belongs to the DHHC palmitoyltransferase family. In terms of processing, autopalmitoylated (in vitro). As to expression, expressed mainly in brain.

It is found in the golgi apparatus membrane. The protein resides in the postsynaptic density. It carries out the reaction L-cysteinyl-[protein] + hexadecanoyl-CoA = S-hexadecanoyl-L-cysteinyl-[protein] + CoA. The enzyme catalyses L-cysteinyl-[protein] + tetradecanoyl-CoA = S-tetradecanoyl-L-cysteinyl-[protein] + CoA. The catalysed reaction is L-cysteinyl-[protein] + octadecanoyl-CoA = S-octadecanoyl-L-cysteinyl-[protein] + CoA. Its activity is regulated as follows. Inhibited by 2-bromopalmitate. Functionally, palmitoyltransferase that catalyzes the addition of palmitate onto various protein substrates. Has no stringent fatty acid selectivity and in addition to palmitate can also transfer onto target proteins myristate from tetradecanoyl-CoA and stearate from octadecanoyl-CoA. Palmitoylates IGF2R and SORT1, promoting their partitioning to an endosomal membrane subdomain where they can interact with the retromer cargo-selective complex. Thereby, regulates retrograde transport from endosomes to the Golgi apparatus of these lysosomal sorting receptors and plays a role in trafficking of lysosomal proteins. In the nervous system, catalyzes the palmitoylation of DLG4/PSD95 and regulates its synaptic clustering and function in synaptogenesis. Could be involved in the differentiation of dopaminergic neurons and the development of the diencephalon. Could also catalyze the palmitoylation of GAP43. Could also palmitoylate DNAJC5 and regulate its localization to the Golgi membrane. Could also palmitoylate FYN as shown in vitro. May palmitoylate CALHM3 subunit of gustatory voltage-gated ion channels and modulate channel gating and kinetics. The protein is Palmitoyltransferase ZDHHC15 of Mus musculus (Mouse).